A 281-amino-acid chain; its full sequence is Probable feruloyl esterase A (281 aa).

A signal peptide spans 1-21 (MKQFSAKYALILLATAGQALA). 3 cysteine pairs are disulfide-bonded: Cys-50/Cys-279, Cys-112/Cys-115, and Cys-248/Cys-255. Substrate is bound at residue Asp-98. The N-linked (GlcNAc...) asparagine glycan is linked to Asn-100. Residue Tyr-101 participates in substrate binding. Ser-154 serves as the catalytic Nucleophile. Asp-215 (charge relay system) is an active-site residue. His-268 is a binding site for substrate. His-268 acts as the Charge relay system in catalysis.

Belongs to the AB hydrolase superfamily. FaeA family.

The protein resides in the secreted. The catalysed reaction is feruloyl-polysaccharide + H2O = ferulate + polysaccharide.. Involved in degradation of plant cell walls. Hydrolyzes the feruloyl-arabinose ester bond in arabinoxylans, and the feruloyl-galactose ester bond in pectin. The sequence is that of Probable feruloyl esterase A (faeA) from Aspergillus niger (strain ATCC MYA-4892 / CBS 513.88 / FGSC A1513).